The following is a 567-amino-acid chain: Geranylgeranyl transferase type-2 subunit alpha (567 aa).

PFTA repeat units follow at residues 44–78, 88–122, 124–158, 159–193, 207–241, and 363–397; these read LDES…QLEV, LVKA…RLPE, NWAR…QAAV, PPAE…QLHP, VLLK…RADP, and VLQS…ALDP. Serine 98 carries the phosphoserine modification. 5 LRR repeats span residues 442-463, 464-486, 487-508, 509-530, and 534-555; these read EVRV…EQLL, LVTH…AALR, CLEV…TNLP, RLQE…QPLT, and RLTL…SEHL.

The protein belongs to the protein prenyltransferase subunit alpha family. As to quaternary structure, heterotrimer composed of RABGGTA, RABGGTB and CHM; within this trimer, RABGGTA and RABGGTB form the catalytic component B, while CHM (component A) mediates peptide substrate binding. The Rab GGTase dimer (RGGT) interacts with CHM (component A) prior to Rab protein binding; the association is stabilized by geranylgeranyl pyrophosphate (GGpp). The CHM:RGGT:Rab complex is destabilized by GGpp. Interacts with non-phosphorylated form of RAB8A; phosphorylation of RAB8A at 'Thr-72' disrupts this interaction.

The enzyme catalyses geranylgeranyl diphosphate + L-cysteinyl-[protein] = S-geranylgeranyl-L-cysteinyl-[protein] + diphosphate. Its activity is regulated as follows. The enzymatic reaction requires the aid of a Rab escort protein (also called component A), such as CHM. Catalyzes the transfer of a geranylgeranyl moiety from geranylgeranyl diphosphate to both cysteines of Rab proteins with the C-terminal sequence -XXCC, -XCXC and -CCXX, such as RAB1A, RAB3A, RAB5A and RAB7A. This chain is Geranylgeranyl transferase type-2 subunit alpha (RABGGTA), found in Bos taurus (Bovine).